A 284-amino-acid chain; its full sequence is Phosphatidylglycerol--prolipoprotein diacylglyceryl transferase (284 aa).

Helical transmembrane passes span 19–39, 60–80, 98–118, 130–150, 199–219, 225–245, and 258–278; these read ISFYWYGMMYVLSFIFAMWFL, LLYLNFLGVVIGGRIGYVLFY, GGMSFHGGLIGVIISIMWFSY, FIVPAVPVGLGLGRLGNFING, QLYEMILEGIVLFVVIYIFSC, GSISGLFLLLYGLFRIIIEFF, and FITLGQVLSFPMVIFGFIIMY. A 1,2-diacyl-sn-glycero-3-phospho-(1'-sn-glycerol) is bound at residue R143.

Belongs to the Lgt family.

The protein resides in the cell inner membrane. The enzyme catalyses L-cysteinyl-[prolipoprotein] + a 1,2-diacyl-sn-glycero-3-phospho-(1'-sn-glycerol) = an S-1,2-diacyl-sn-glyceryl-L-cysteinyl-[prolipoprotein] + sn-glycerol 1-phosphate + H(+). Its pathway is protein modification; lipoprotein biosynthesis (diacylglyceryl transfer). Functionally, catalyzes the transfer of the diacylglyceryl group from phosphatidylglycerol to the sulfhydryl group of the N-terminal cysteine of a prolipoprotein, the first step in the formation of mature lipoproteins. This Blochmanniella floridana protein is Phosphatidylglycerol--prolipoprotein diacylglyceryl transferase.